The primary structure comprises 369 residues: Methylthioribose-1-phosphate isomerase (369 aa).

Residues 54 to 56 (RGA), Arg-95, and Gln-208 contribute to the substrate site. Residue Asp-249 is the Proton donor of the active site. 259-260 (NK) contacts substrate.

The protein belongs to the eIF-2B alpha/beta/delta subunits family. MtnA subfamily.

The enzyme catalyses 5-(methylsulfanyl)-alpha-D-ribose 1-phosphate = 5-(methylsulfanyl)-D-ribulose 1-phosphate. It functions in the pathway amino-acid biosynthesis; L-methionine biosynthesis via salvage pathway; L-methionine from S-methyl-5-thio-alpha-D-ribose 1-phosphate: step 1/6. In terms of biological role, catalyzes the interconversion of methylthioribose-1-phosphate (MTR-1-P) into methylthioribulose-1-phosphate (MTRu-1-P). In Desulfosudis oleivorans (strain DSM 6200 / JCM 39069 / Hxd3) (Desulfococcus oleovorans), this protein is Methylthioribose-1-phosphate isomerase.